A 152-amino-acid chain; its full sequence is Transcriptional repressor NrdR (152 aa).

A zinc finger lies at 3 to 34; the sequence is CPKCGSLNDKVVDTRQSKDGTVIRRRRECLDC. Positions 49 to 139 constitute an ATP-cone domain; sequence IVVKKKNGTT…VYNEFQDIKD (91 aa).

The protein belongs to the NrdR family. Zn(2+) serves as cofactor.

Functionally, negatively regulates transcription of bacterial ribonucleotide reductase nrd genes and operons by binding to NrdR-boxes. The polypeptide is Transcriptional repressor NrdR (Persephonella marina (strain DSM 14350 / EX-H1)).